The sequence spans 358 residues: Probable D-xylulose reductase A (358 aa).

Residues Cys-47, His-72, and Glu-73 each coordinate Zn(2+). Residue 182–187 (GAGPVG) participates in NAD(+) binding.

It belongs to the zinc-containing alcohol dehydrogenase family. The cofactor is Zn(2+).

The enzyme catalyses xylitol + NAD(+) = D-xylulose + NADH + H(+). Its pathway is carbohydrate degradation; L-arabinose degradation via L-arabinitol; D-xylulose 5-phosphate from L-arabinose (fungal route): step 4/5. Xylitol dehydrogenase which catalyzes the conversion of xylitol to D-xylulose. Xylose is a major component of hemicelluloses such as xylan. Most fungi utilize D-xylose via three enzymatic reactions, xylose reductase (XR), xylitol dehydrogenase (XDH), and xylulokinase, to form xylulose 5-phosphate, which enters pentose phosphate pathway. This chain is Probable D-xylulose reductase A (xdhA), found in Aspergillus fumigatus (strain CBS 144.89 / FGSC A1163 / CEA10) (Neosartorya fumigata).